Reading from the N-terminus, the 771-residue chain is UPF0313 protein PSPTO_4928 (771 aa).

The Radical SAM core domain maps to 371-649; that stretch reads AYDMIRFSVN…KAFLRYHDPK (279 aa). The [4Fe-4S] cluster site is built by cysteine 385, cysteine 389, and cysteine 392. The tract at residues 683 to 771 is disordered; it reads DTYQSARRKN…KPARKPVVPR (89 aa). 2 stretches are compositionally biased toward basic and acidic residues: residues 726 to 735 and 745 to 754; these read KPWDKREEAK and AAKERMDAAK. Basic residues predominate over residues 756–765; that stretch reads GKGKGGKPAR.

The protein belongs to the UPF0313 family. Requires [4Fe-4S] cluster as cofactor.

The sequence is that of UPF0313 protein PSPTO_4928 from Pseudomonas syringae pv. tomato (strain ATCC BAA-871 / DC3000).